Reading from the N-terminus, the 694-residue chain is Ubiquitin-like modifier-activating enzyme ATG7 (694 aa).

The short motif at 370–375 (GAGTLG) is the GXGXXG motif element. Catalysis depends on Cys-550, which acts as the Glycyl thioester intermediate. The segment at 650 to 689 (ALQEKEYVAELSGLAEVQRRAEEMAAHVDWEEDDDLVDDG) is homodimerization.

It belongs to the ATG7 family. In terms of assembly, homodimer. Interacts with ATG8 through a thioester bond between Cys-550 and the C-terminal 'Gly-116' of ATG8 and with ATG12 through a thioester bond between Cys-550 and the C-terminal 'Gly-160' of ATG12. Also interacts with ATG3.

Its subcellular location is the cytoplasm. It is found in the preautophagosomal structure. In terms of biological role, E1-like activating enzyme involved in the 2 ubiquitin-like systems required for cytoplasm to vacuole transport (Cvt) and autophagy. Activates ATG12 for its conjugation with ATG5 and ATG8 for its conjugation with phosphatidylethanolamine. Both systems are needed for the ATG8 association to Cvt vesicles and autophagosomes membranes. Autophagy is essential for maintenance of amino acid levels and protein synthesis under nitrogen starvation. Required for selective autophagic degradation of the nucleus (nucleophagy) as well as for mitophagy which contributes to regulate mitochondrial quantity and quality by eliminating the mitochondria to a basal level to fulfill cellular energy requirements and preventing excess ROS production. Autophagy is required for proper vegetative growth, asexual/sexual reproduction, and full virulence. Autophagy is particularly involved in the biosynthesis of deoxynivalenol (DON), an important virulence determinant. This chain is Ubiquitin-like modifier-activating enzyme ATG7, found in Gibberella zeae (strain ATCC MYA-4620 / CBS 123657 / FGSC 9075 / NRRL 31084 / PH-1) (Wheat head blight fungus).